The chain runs to 205 residues: Adenylyl-sulfate kinase (205 aa).

31–38 contacts ATP; sequence GLSGAGKS. S105 (phosphoserine intermediate) is an active-site residue.

Belongs to the APS kinase family.

The catalysed reaction is adenosine 5'-phosphosulfate + ATP = 3'-phosphoadenylyl sulfate + ADP + H(+). It participates in sulfur metabolism; hydrogen sulfide biosynthesis; sulfite from sulfate: step 2/3. Its function is as follows. Catalyzes the synthesis of activated sulfate. This is Adenylyl-sulfate kinase from Shewanella baltica (strain OS195).